Here is a 60-residue protein sequence, read N- to C-terminus: Sec-independent protein translocase protein TatA (60 aa).

Residues 1-21 (MAGLGVTELLIILAIVIVLFG) form a helical membrane-spanning segment.

This sequence belongs to the TatA/E family. In terms of assembly, forms a complex with TatC.

The protein localises to the cell membrane. Part of the twin-arginine translocation (Tat) system that transports large folded proteins containing a characteristic twin-arginine motif in their signal peptide across membranes. TatA could form the protein-conducting channel of the Tat system. This Herpetosiphon aurantiacus (strain ATCC 23779 / DSM 785 / 114-95) protein is Sec-independent protein translocase protein TatA.